A 576-amino-acid polypeptide reads, in one-letter code: Formate--tetrahydrofolate ligase (576 aa).

64–71 (TPLGEGKT) contacts ATP.

It belongs to the formate--tetrahydrofolate ligase family.

It catalyses the reaction (6S)-5,6,7,8-tetrahydrofolate + formate + ATP = (6R)-10-formyltetrahydrofolate + ADP + phosphate. It participates in one-carbon metabolism; tetrahydrofolate interconversion. The chain is Formate--tetrahydrofolate ligase from Aeromonas hydrophila subsp. hydrophila (strain ATCC 7966 / DSM 30187 / BCRC 13018 / CCUG 14551 / JCM 1027 / KCTC 2358 / NCIMB 9240 / NCTC 8049).